Consider the following 404-residue polypeptide: Cysteine desulfurase IscS (404 aa).

Pyridoxal 5'-phosphate-binding positions include 75 to 76 (AT), Asn155, Gln183, and 203 to 205 (SAH). Position 206 is an N6-(pyridoxal phosphate)lysine (Lys206). Thr243 is a pyridoxal 5'-phosphate binding site. Catalysis depends on Cys328, which acts as the Cysteine persulfide intermediate. Cys328 serves as a coordination point for [2Fe-2S] cluster.

This sequence belongs to the class-V pyridoxal-phosphate-dependent aminotransferase family. NifS/IscS subfamily. As to quaternary structure, homodimer. Forms a heterotetramer with IscU, interacts with other sulfur acceptors. It depends on pyridoxal 5'-phosphate as a cofactor.

It is found in the cytoplasm. The catalysed reaction is (sulfur carrier)-H + L-cysteine = (sulfur carrier)-SH + L-alanine. The protein operates within cofactor biosynthesis; iron-sulfur cluster biosynthesis. Its function is as follows. Master enzyme that delivers sulfur to a number of partners involved in Fe-S cluster assembly, tRNA modification or cofactor biosynthesis. Catalyzes the removal of elemental sulfur atoms from cysteine to produce alanine. Functions as a sulfur delivery protein for Fe-S cluster synthesis onto IscU, an Fe-S scaffold assembly protein, as well as other S acceptor proteins. This Vibrio atlanticus (strain LGP32) (Vibrio splendidus (strain Mel32)) protein is Cysteine desulfurase IscS.